We begin with the raw amino-acid sequence, 103 residues long: Histone H4 (103 aa).

Residues 1 to 32 (MNTQSIGAKGKSKAAKGIAKRHRKQSSLSDSI) form a disordered region. The segment covering 10–25 (GKSKAAKGIAKRHRKQ) has biased composition (basic residues). Lys-16 carries the N6-acetyl-N6-methyllysine; alternate modification. An N6-methyllysine; alternate modification is found at Lys-16. The DNA-binding element occupies 20 to 24 (KRHRK). Lys-94 carries the post-translational modification N6-glutaryllysine.

This sequence belongs to the histone H4 family. The nucleosome is a histone octamer containing two molecules each of H2A, H2B, H3 and H4 assembled in one H3-H4 heterotetramer and two H2A-H2B heterodimers. The octamer wraps approximately 147 bp of DNA. In terms of processing, glutarylation at Lys-94 (H4K91glu) destabilizes nucleosomes by promoting dissociation of the H2A-H2B dimers from nucleosomes.

Its subcellular location is the nucleus. The protein resides in the chromosome. Its function is as follows. Core component of nucleosome. Nucleosomes wrap and compact DNA into chromatin, limiting DNA accessibility to the cellular machineries which require DNA as a template. Histones thereby play a central role in transcription regulation, DNA repair, DNA replication and chromosomal stability. DNA accessibility is regulated via a complex set of post-translational modifications of histones, also called histone code, and nucleosome remodeling. The sequence is that of Histone H4 (HHF1) from Encephalitozoon cuniculi (strain GB-M1) (Microsporidian parasite).